Consider the following 261-residue polypeptide: Pimeloyl-[acyl-carrier protein] methyl ester esterase (261 aa).

The 226-residue stretch at 16-241 folds into the AB hydrolase-1 domain; sequence LVLLHGWGLN…HAAHAPFISH (226 aa). Substrate-binding positions include tryptophan 22, 82–83, and 143–147; these read SL and FLALQ. Serine 82 (nucleophile) is an active-site residue. Catalysis depends on residues aspartate 207 and histidine 235. Substrate is bound at residue histidine 235.

It belongs to the AB hydrolase superfamily. Carboxylesterase BioH family. Monomer.

The protein localises to the cytoplasm. The catalysed reaction is 6-carboxyhexanoyl-[ACP] methyl ester + H2O = 6-carboxyhexanoyl-[ACP] + methanol + H(+). It participates in cofactor biosynthesis; biotin biosynthesis. Its function is as follows. The physiological role of BioH is to remove the methyl group introduced by BioC when the pimeloyl moiety is complete. It allows to synthesize pimeloyl-ACP via the fatty acid synthetic pathway through the hydrolysis of the ester bonds of pimeloyl-ACP esters. This is Pimeloyl-[acyl-carrier protein] methyl ester esterase from Photorhabdus laumondii subsp. laumondii (strain DSM 15139 / CIP 105565 / TT01) (Photorhabdus luminescens subsp. laumondii).